Here is a 225-residue protein sequence, read N- to C-terminus: UPF0758 protein BAMEG_4721 (225 aa).

The MPN domain occupies 103–225; sequence SIRSPEDCAT…FVSLKEKGHI (123 aa). Zn(2+) is bound by residues His-174, His-176, and Asp-187. Positions 174–187 match the JAMM motif motif; the sequence is HNHPSGDPAPSRED.

The protein belongs to the UPF0758 family.

The polypeptide is UPF0758 protein BAMEG_4721 (Bacillus anthracis (strain CDC 684 / NRRL 3495)).